The following is a 256-amino-acid chain: Stanniocalcin (256 aa).

Residues 1–18 (MLAKFGLCAVFLVLGTAA) form the signal peptide. Positions 19–33 (TFDTDPEEASPRRAR) are excised as a propeptide. Residue N62 is glycosylated (N-linked (GlcNAc...) asparagine).

This sequence belongs to the stanniocalcin family. In terms of assembly, homodimer; disulfide-linked. As to expression, produced and secreted by the corpuscles of Stannius.

The protein localises to the secreted. Functionally, its primary function is the prevention of hypercalcemia. Upon release into the circulation, it lowers calcium transport by the gills, thereby reducing its rate of influx from the environment into the extracellular compartment. STC also stimulates phosphate reabsorption by renal proximal tubules. The consequence of this action is increased levels of plasma phosphate, which combines with excess calcium and promotes its disposal into bone and scales. The sequence is that of Stanniocalcin (stc) from Oncorhynchus kisutch (Coho salmon).